A 120-amino-acid chain; its full sequence is Chaperonin GroEL (120 aa).

ATP is bound at residue 23–27 (DGTTT).

The protein belongs to the chaperonin (HSP60) family. As to quaternary structure, forms a cylinder of 14 subunits composed of two heptameric rings stacked back-to-back. Interacts with the co-chaperonin GroES.

The protein resides in the cytoplasm. The catalysed reaction is ATP + H2O + a folded polypeptide = ADP + phosphate + an unfolded polypeptide.. Together with its co-chaperonin GroES, plays an essential role in assisting protein folding. The GroEL-GroES system forms a nano-cage that allows encapsulation of the non-native substrate proteins and provides a physical environment optimized to promote and accelerate protein folding. This Mycobacterium intracellulare protein is Chaperonin GroEL.